Consider the following 1703-residue polypeptide: Homeobox protein prospero (1703 aa).

11 disordered regions span residues 23 to 292 (LKAN…SNGG), 322 to 357 (SVST…SGAS), 437 to 521 (NSIA…QSQL), 608 to 692 (EPQT…ESVD), 732 to 751 (EDDD…CLKK), 823 to 844 (QEDS…VEKN), 875 to 951 (SECQ…DSGA), 1040 to 1101 (FEQE…RMGG), 1197 to 1217 (SPRT…TQSA), 1245 to 1389 (PFCL…VSLP), and 1418 to 1469 (AGQA…PSML). The span at 36-53 (QQHQPQFQQQQQQQQQQQ) shows a compositional bias: low complexity. The span at 66 to 79 (SNGHTSPIPSQVNG) shows a compositional bias: polar residues. Over residues 92-109 (TNTNTGSHSHSNSGNTNT) the composition is skewed to low complexity. The span at 110-126 (DADKEQEREKAKEKANE) shows a compositional bias: basic and acidic residues. Acidic residues predominate over residues 127–136 (EESEDSDDDV). Composition is skewed to low complexity over residues 137–188 (VVVL…GGSS), 196–255 (SSRQ…ANSK), 274–292 (ASSN…SNGG), 327–337 (NSSSSNNNNSS), and 346–357 (SPTSNSPVSGAS). The span at 437–452 (NSIAPANSTPMSNGTN) shows a compositional bias: polar residues. Positions 453–472 (ASISPGSAHSSSHSHQGVSP) are enriched in low complexity. Residues Ser-479, Ser-482, Ser-485, and Ser-497 each carry the phosphoserine modification. 2 stretches are compositionally biased toward polar residues: residues 503-521 (SVSS…QSQL) and 608-617 (EPQTAPQPQQ). The segment covering 618–642 (SPHGSSHSSRSGSGSGSHSSMASDG) has biased composition (low complexity). Basic and acidic residues-rich tracts occupy residues 643–658 (SLRR…HGAQ) and 674–691 (SESR…KESV). Phosphoserine is present on residues Ser-651 and Ser-654. Acidic residues predominate over residues 875–892 (SECQELDQDQDVEQEQEP). The span at 927 to 944 (PGSSSPSPSPLKPKTSLG) shows a compositional bias: low complexity. Positions 1040-1054 (FEQEQQEQQRRKEEQ) are enriched in basic and acidic residues. Over residues 1055-1076 (QQQIQRQQQHLQQLQQQQMEQQ) the composition is skewed to low complexity. Residues 1208 to 1217 (NGPTPATQSA) show a composition bias toward polar residues. A compositionally biased stretch (low complexity) spans 1252–1278 (QQQQQQTAQQQQSAQQQQQSSQQTQQQ). Positions 1291–1298 (PKKKRHKV) match the Nuclear localization signal motif. Residues 1328-1348 (PQQQQQQQQQQQQQQQQQQQQ) show a composition bias toward low complexity. The segment covering 1349 to 1367 (ASNGGNSNATPAQSPTRSS) has biased composition (polar residues). The span at 1374–1384 (PQPPPPPPPMM) shows a compositional bias: pro residues. The segment covering 1427-1437 (HQHHQQHHPHH) has biased composition (basic residues). Residues 1438 to 1451 (QSMQLSSSPPGSLG) are compositionally biased toward low complexity. In terms of domain architecture, Prospero-type homeo spans 1545-1603 (SSTLTPMHLRKAKLMFFWVRYPSSAVLKMYFPDIKFNKNNTAQLVKWFSNFREFYYIQM). The interval 1545–1703 (SSTLTPMHLR…KSPNFLEQLE (159 aa)) is homeo-Prospero. Residues 1604–1703 (EKYARQAVTE…KSPNFLEQLE (100 aa)) enclose the Prospero domain.

It belongs to the Prospero homeodomain family.

It localises to the nucleus. Its subcellular location is the cytoplasm. It is found in the cell cortex. Homeodomain protein that controls neuronal identity. As a transcriptional factor, regulates the expression of ftz, eve and en in a subset of neuroblast progeny and modulates the transcriptional activity of other homeodomain proteins such as Dfd. Required for proper neuronal differentiation, axonal outgrowth and pathfinding of most or all neurons and their precursors in central and peripheral nervous systems. Regulates asymmetric stem cell self-renewal together with brat. In Drosophila melanogaster (Fruit fly), this protein is Homeobox protein prospero (pros).